Reading from the N-terminus, the 202-residue chain is Putative NADH dehydrogenase/NAD(P)H nitroreductase SCO7141 (202 aa).

It belongs to the nitroreductase family. HadB/RutE subfamily. FMN is required as a cofactor.

In Streptomyces coelicolor (strain ATCC BAA-471 / A3(2) / M145), this protein is Putative NADH dehydrogenase/NAD(P)H nitroreductase SCO7141.